The following is a 324-amino-acid chain: Transcription factor TCP24 (324 aa).

The 59-residue stretch at 50–108 (GKDRHSKVLTSKGLRDRRIRLSVATAIQFYDLQDRLGFDQPSKAVEWLINAASDSITDL) folds into the TCP domain. Disordered stretches follow at residues 122-215 (QNQT…PMNH) and 261-297 (QRSS…NHQL). Residues 127–142 (SACSSGTSESSLLSLS) are compositionally biased toward low complexity. Residues 144-162 (TEIRGKARERARERTAKDR) enclose the R domain. Over residues 144 to 167 (TEIRGKARERARERTAKDRDKDLQ) the composition is skewed to basic and acidic residues. Polar residues-rich tracts occupy residues 168–192 (NAHS…NWTG) and 200–212 (VQLQ…SQEP). Residues 261–281 (QRSSISSSSSSSSPMDSQSIS) show a composition bias toward low complexity.

As to quaternary structure, forms a heterodimeric complex with ABAP1. Interacts with SPL. Expressed in cotyledons, particularly in the vascular region, in leaves, roots, stems, buds, flowers and siliques.

Its subcellular location is the nucleus. Its function is as follows. Plays a pivotal role in the control of morphogenesis of shoot organs by negatively regulating the expression of boundary-specific genes such as CUC genes, probably through the induction of miRNA (e.g. miR164). In association with ABAP1, exerts a negative role in cell proliferation in leaves, possibly by inhibiting mitotic DNA replication. Participates in ovule development. The sequence is that of Transcription factor TCP24 (TCP24) from Arabidopsis thaliana (Mouse-ear cress).